A 148-amino-acid polypeptide reads, in one-letter code: Putative pre-16S rRNA nuclease (148 aa).

It belongs to the YqgF nuclease family.

It is found in the cytoplasm. Functionally, could be a nuclease involved in processing of the 5'-end of pre-16S rRNA. The sequence is that of Putative pre-16S rRNA nuclease from Chlamydia muridarum (strain MoPn / Nigg).